A 435-amino-acid polypeptide reads, in one-letter code: Ras association domain-containing protein 9 (435 aa).

The disordered stretch occupies residues methionine 1 to methionine 22. One can recognise a Ras-associating domain in the interval glutamate 25 to alanine 119. The stretch at histidine 195–glutamate 290 forms a coiled coil. Residues asparagine 380–threonine 435 form a disordered region. A compositionally biased stretch (polar residues) spans arginine 400–threonine 426.

Interacts with PAM.

Its subcellular location is the endosome. May play a role in regulating vesicuar trafficking in cells. The protein is Ras association domain-containing protein 9 (RASSF9) of Homo sapiens (Human).